A 314-amino-acid polypeptide reads, in one-letter code: Serine/threonine-protein phosphatase PP2A-5 catalytic subunit (314 aa).

Residues D62, H64, D90, and N122 each contribute to the Mn(2+) site. The Proton donor role is filled by H123. Residues H172 and H246 each coordinate Mn(2+).

It belongs to the PPP phosphatase family. PP-2A subfamily. Mn(2+) serves as cofactor.

It localises to the cytoplasm. The enzyme catalyses O-phospho-L-seryl-[protein] + H2O = L-seryl-[protein] + phosphate. The catalysed reaction is O-phospho-L-threonyl-[protein] + H2O = L-threonyl-[protein] + phosphate. This chain is Serine/threonine-protein phosphatase PP2A-5 catalytic subunit (NPP5), found in Nicotiana tabacum (Common tobacco).